The primary structure comprises 64 residues: Conotoxin VnMLCL-042 (64 aa).

The first 19 residues, 1 to 19, serve as a signal peptide directing secretion; sequence MLCLPVFIILLLLASPAAP. The propeptide occupies 20-43; it reads NPLQTRIQSNLIRAGPEDANMKTD. The residue at position 63 (Met-63) is a Methionine amide.

Belongs to the conotoxin T superfamily. As to expression, expressed by the venom duct.

It localises to the secreted. This Conus ventricosus (Mediterranean cone) protein is Conotoxin VnMLCL-042.